The primary structure comprises 132 residues: C-X-C motif chemokine 5 (132 aa).

An N-terminal signal peptide occupies residues 1 to 40 (MSLQLRSSARIPSGSISPFMRMAPLAFLLLFTLPQHLAEA). Disulfide bonds link C53–C79 and C55–C95.

This sequence belongs to the intercrine alpha (chemokine CxC) family. Monomer. Homodimer. GCP-2(1-78) and GCP-2(9-78) are produced by proteolytic cleavage after secretion from fibroblasts and epithelial cells. GCP-2(9-78) is the most prominent form. A number of additional N-terminal (processed between pos. 41 and 48) and C-terminal (processed between pos. 118 and 132) processed forms have been identified, probably also representing intermediate states.

Its subcellular location is the secreted. Functionally, may participate in the recruitment of inflammatory cells by injured or infected tissue. GCP-2(1-78) and, more potent, GCP-2(9-78) attract neutrophils and are involved in neutrophil activation. The protein is C-X-C motif chemokine 5 (Cxcl5) of Mus musculus (Mouse).